Consider the following 78-residue polypeptide: MMLLQTEKALRLLEQYNTITILVPREYTKSKIKEFFEKKGYKVKKVNTLITKKGLKKAYVRFKEEGVARKVAEELGGL.

The protein belongs to the universal ribosomal protein uL23 family. As to quaternary structure, part of the 50S ribosomal subunit. Contacts protein L29.

Functionally, binds to 23S rRNA. One of the proteins that surrounds the polypeptide exit tunnel on the outside of the ribosome. The sequence is that of Large ribosomal subunit protein uL23 from Nanoarchaeum equitans (strain Kin4-M).